The chain runs to 119 residues: Large ribosomal subunit protein bL20 (119 aa).

The protein belongs to the bacterial ribosomal protein bL20 family.

Functionally, binds directly to 23S ribosomal RNA and is necessary for the in vitro assembly process of the 50S ribosomal subunit. It is not involved in the protein synthesizing functions of that subunit. This Buchnera aphidicola subsp. Cinara cedri (strain Cc) protein is Large ribosomal subunit protein bL20.